Consider the following 73-residue polypeptide: RIFDTSCKGFYDRGLFAQLDRVCEDCYNLYRKPHVAAECRRDCYTTEVFESCLKDLMMHDFINEYKEMALMVS.

3 cysteine pairs are disulfide-bonded: Cys-7–Cys-43, Cys-23–Cys-39, and Cys-26–Cys-52. Serine amide is present on Ser-73.

Produced by the medulla terminalis X-organ in the eyestalks and transported to the sinus gland where they are stored and released. Found also in the brain; in the neuroendocrine structures of the protocerebrum.

The protein localises to the secreted. Its function is as follows. Hormone found in the sinus gland of isopods and decapods which controls the blood sugar level. Has a secretagogue action over the amylase released from the midgut gland. May act as a stress hormone and may be involved in the control of molting and reproduction. The chain is Crustacean hyperglycemic hormone from Armadillidium vulgare (Pillbug).